The sequence spans 454 residues: Metacaspase-1A (454 aa).

Over residues M1 to H16 the composition is skewed to gly residues. Positions M1–H129 are disordered. Composition is skewed to low complexity over residues Y38–N47, Y59–Q80, G88–R101, and G109–G120. Catalysis depends on residues H244 and C300.

The protein belongs to the peptidase C14B family.

Involved in cell death (apoptosis). This is Metacaspase-1A (casA) from Neurospora crassa (strain ATCC 24698 / 74-OR23-1A / CBS 708.71 / DSM 1257 / FGSC 987).